The sequence spans 257 residues: uncharacterized protein (257 aa).

Positions 1–22 (MIHSKRLKMCLCLIILSVFIGA) are cleaved as a signal peptide. Cys-23 carries the N-palmitoyl cysteine lipid modification. A lipid anchor (S-diacylglycerol cysteine) is attached at Cys-23.

This sequence belongs to the staphylococcal tandem lipoprotein family.

It localises to the cell membrane. This is an uncharacterized protein from Staphylococcus aureus (strain MRSA252).